A 247-amino-acid polypeptide reads, in one-letter code: Segregation and condensation protein A (247 aa).

It belongs to the ScpA family. As to quaternary structure, component of a cohesin-like complex composed of ScpA, ScpB and the Smc homodimer, in which ScpA and ScpB bind to the head domain of Smc. The presence of the three proteins is required for the association of the complex with DNA.

The protein localises to the cytoplasm. Participates in chromosomal partition during cell division. May act via the formation of a condensin-like complex containing Smc and ScpB that pull DNA away from mid-cell into both cell halves. The chain is Segregation and condensation protein A from Bacillus cereus (strain 03BB102).